A 308-amino-acid chain; its full sequence is tRNA pseudouridine synthase B (308 aa).

Asp-33 (nucleophile) is an active-site residue.

The protein belongs to the pseudouridine synthase TruB family. Type 1 subfamily.

The enzyme catalyses uridine(55) in tRNA = pseudouridine(55) in tRNA. Functionally, responsible for synthesis of pseudouridine from uracil-55 in the psi GC loop of transfer RNAs. The sequence is that of tRNA pseudouridine synthase B from Nitrosomonas europaea (strain ATCC 19718 / CIP 103999 / KCTC 2705 / NBRC 14298).